The primary structure comprises 622 residues: MKNALINATTKKFEIIEKTVLPITWGLYWHNKFETWKYDAYDEKNVFCFGSGVLPVIGGHRLIFSFRSPLWDGFYFSSMGGAGYQFKSTGLNNVAIIGRCENPSILVIENDGQLRIDFIEVKEELKTVYEVSKYILELYKDKNLRSVVVGEAAKRTNMGGLFSQTVRNGKFVEGSEDWAARGGGGSVLYRAHNIMGIVFFGDEKEDKEEKEKAKKIIESYYKKPMSKVVLEHTKKYRYDEETKTGGTFGNNWLLYKEKVPIFNWRMPYIDKEDRKKILEKILKFYLEIFNKETIEPKRWANCGEPCPVLCKKYRNKNKVDYEPYASNGTLLGIFDLYEADRVVKTADALGFDAIEIGNLTAWVFELLDVGLLKEEELNIKKPIFDYKKITNDDDEEIREISKHNAEQAIKFMHNLAENSNDLYKILSLGKRKAAKILNERFKSRVNKIGKKFNDFAVYVPFGDWGEIAPNLYWTPGFFMPFVIQGRYLTYYKPEFNEPEKLAELVVESIKLELPIENLGICRFHRKWLKPVLKELVKELLGIEDIVEDSINLYREICEYNKKIGYPAKIESERVKDLIIAMAKEFGNEEWTKKFENKENVDEYVKRVLNKYSELLGIDWRIS.

[4Fe-4S] cluster contacts are provided by C302, C306, C310, and C521.

It belongs to the AOR/FOR family. The cofactor is [4Fe-4S] cluster.

This is an uncharacterized protein from Methanocaldococcus jannaschii (strain ATCC 43067 / DSM 2661 / JAL-1 / JCM 10045 / NBRC 100440) (Methanococcus jannaschii).